Here is a 480-residue protein sequence, read N- to C-terminus: Cysteine--tRNA ligase (480 aa).

Cys31 serves as a coordination point for Zn(2+). The short motif at 33 to 43 is the 'HIGH' region element; it reads PTVYDSSHIGH. The Zn(2+) site is built by Cys211, His236, and Glu240. The short motif at 269–273 is the 'KMSKS' region element; that stretch reads KMSKS. An ATP-binding site is contributed by Lys272.

This sequence belongs to the class-I aminoacyl-tRNA synthetase family. Requires Zn(2+) as cofactor.

It catalyses the reaction tRNA(Cys) + L-cysteine + ATP = L-cysteinyl-tRNA(Cys) + AMP + diphosphate. In Encephalitozoon cuniculi (strain GB-M1) (Microsporidian parasite), this protein is Cysteine--tRNA ligase.